Here is a 384-residue protein sequence, read N- to C-terminus: MSHLFPTYAKWDVTITSGKGTKLYDNQGNEYLDFVSGIAVCNLGHCHPKVVAAVEEQLHSFWHVSNLFHIPIQENVAALLTEQSGMDAVFFCNSGAEANEAAIKLARKATGKHEIVTFTQSFHGRTLGTMSATGQDKIKTGFGPMLETFHHVPFNDIAALKQVVNEQTAAIVLEVIQGEGGVNLIDPEFAASVNHVCQEHGILLIIDEIQTGIGRTGTAFAFQQYELTPDIITVAKGLGNGFPVGAMLGKQHLIDAFSAGSHGSTFGGNPLAMAAAQAVLTEVFQPNFLQAVQEKGKQLLSGLNEALSGLEIVKEIRGNGLLVGIELQEEGAPFIKQLREKGLLVLNAGPNVIRLLPPLVVTSEELHEAVTQLKEVLDQASVHA.

Residues 95 to 96 and Phe-122 each bind pyridoxal 5'-phosphate; that span reads GA. N(2)-acetyl-L-ornithine is bound at residue Arg-125. 207–210 provides a ligand contact to pyridoxal 5'-phosphate; sequence DEIQ. The residue at position 236 (Lys-236) is an N6-(pyridoxal phosphate)lysine. Ser-264 is a N(2)-acetyl-L-ornithine binding site. Thr-265 is a pyridoxal 5'-phosphate binding site.

Belongs to the class-III pyridoxal-phosphate-dependent aminotransferase family. ArgD subfamily. In terms of assembly, homodimer. Requires pyridoxal 5'-phosphate as cofactor.

The protein localises to the cytoplasm. The enzyme catalyses N(2)-acetyl-L-ornithine + 2-oxoglutarate = N-acetyl-L-glutamate 5-semialdehyde + L-glutamate. It functions in the pathway amino-acid biosynthesis; L-arginine biosynthesis; N(2)-acetyl-L-ornithine from L-glutamate: step 4/4. The sequence is that of Acetylornithine aminotransferase from Halalkalibacterium halodurans (strain ATCC BAA-125 / DSM 18197 / FERM 7344 / JCM 9153 / C-125) (Bacillus halodurans).